The chain runs to 532 residues: Pyruvate kinase (532 aa).

Arg-63 is a substrate binding site. K(+) contacts are provided by Asn-65, Ser-67, Asp-99, and Thr-100. 65-68 serves as a coordination point for ATP; it reads NFSH. The ATP site is built by Arg-106 and Lys-191. Residue Glu-256 coordinates Mg(2+). Substrate is bound by residues Gly-279, Asp-280, and Thr-312. Asp-280 lines the Mg(2+) pocket.

Belongs to the pyruvate kinase family. In terms of assembly, homotetramer. The cofactor is Mg(2+). Requires K(+) as cofactor.

It catalyses the reaction pyruvate + ATP = phosphoenolpyruvate + ADP + H(+). It participates in carbohydrate degradation; glycolysis; pyruvate from D-glyceraldehyde 3-phosphate: step 5/5. This is Pyruvate kinase (pkiA) from Agaricus bisporus (White button mushroom).